Consider the following 711-residue polypeptide: Polyribonucleotide nucleotidyltransferase (711 aa).

Mg(2+) contacts are provided by Asp486 and Asp492. The KH domain occupies 553 to 612 (PRIHTIKISTDKIKDVIGKGGSVIRALTEETGTTIEIEDDGTVKIAATDGEKAKYAIRRI). One can recognise an S1 motif domain in the interval 622-690 (GRIYNGKVTR…RQGRVRLSIK (69 aa)). Residues 690–711 (KEATEQSQPAAAPEAPASEQAE) are disordered. The segment covering 694 to 711 (EQSQPAAAPEAPASEQAE) has biased composition (low complexity).

Belongs to the polyribonucleotide nucleotidyltransferase family. As to quaternary structure, component of the RNA degradosome, which is a multiprotein complex involved in RNA processing and mRNA degradation. It depends on Mg(2+) as a cofactor.

The protein resides in the cytoplasm. It catalyses the reaction RNA(n+1) + phosphate = RNA(n) + a ribonucleoside 5'-diphosphate. Functionally, involved in mRNA degradation. Catalyzes the phosphorolysis of single-stranded polyribonucleotides processively in the 3'- to 5'-direction. In Salmonella choleraesuis (strain SC-B67), this protein is Polyribonucleotide nucleotidyltransferase.